A 442-amino-acid chain; its full sequence is 3-dehydroquinate synthase, chloroplastic (442 aa).

A chloroplast-targeting transit peptide spans 1–58 (MAANTISLSNVAASKNLNSFQSRAFIAPPTIFFPVASAKSKPGELSLSSTTLSRSRVR). Ala-59 carries the post-translational modification N-acetylalanine. NAD(+) is bound by residues Asn-119, 150 to 152 (DGE), Lys-155, 183 to 188 (GGVIGD), 208 to 209 (TT), Lys-221, Lys-230, and 248 to 251 (TLNT). Glu-263 contacts a divalent metal cation. Lys-305 is a binding site for NAD(+). Residues His-326 and His-343 each contribute to the a divalent metal cation site.

The protein belongs to the sugar phosphate cyclases superfamily. Dehydroquinate synthase family. Homodimer. Requires a divalent metal cation as cofactor. NAD(+) is required as a cofactor.

It localises to the plastid. Its subcellular location is the chloroplast. It catalyses the reaction 7-phospho-2-dehydro-3-deoxy-D-arabino-heptonate = 3-dehydroquinate + phosphate. It participates in metabolic intermediate biosynthesis; chorismate biosynthesis; chorismate from D-erythrose 4-phosphate and phosphoenolpyruvate: step 2/7. Catalyzes the second step in the shikimate pathway. The protein is 3-dehydroquinate synthase, chloroplastic (DHQS) of Arabidopsis thaliana (Mouse-ear cress).